The sequence spans 242 residues: DNA repair protein RecO (242 aa).

It belongs to the RecO family.

Its function is as follows. Involved in DNA repair and RecF pathway recombination. In Nitrosospira multiformis (strain ATCC 25196 / NCIMB 11849 / C 71), this protein is DNA repair protein RecO.